The following is a 174-amino-acid chain: Caltractin ICL1e (174 aa).

Residues Met-1–Asp-33 are disordered. EF-hand domains follow at residues Asp-33–Asp-68, Ile-88–Asn-103, Glu-105–Thr-140, and Met-141–Phe-174.

Belongs to the centrin family. As to quaternary structure, monomer.

It localises to the cytoplasm. It is found in the cytoskeleton. Functionally, plays a fundamental role in microtubule organizing center structure and function. Component of the infraciliary lattice (ICL) and the ciliary basal bodies. This Paramecium tetraurelia protein is Caltractin ICL1e (Icl1e).